A 243-amino-acid chain; its full sequence is Glucosamine-6-phosphate deaminase (243 aa).

The active-site Proton acceptor; for enolization step is Asp67. Asn137 (for ring-opening step) is an active-site residue. The Proton acceptor; for ring-opening step role is filled by His139. Glu144 functions as the For ring-opening step in the catalytic mechanism.

The protein belongs to the glucosamine/galactosamine-6-phosphate isomerase family. NagB subfamily.

The enzyme catalyses alpha-D-glucosamine 6-phosphate + H2O = beta-D-fructose 6-phosphate + NH4(+). Its pathway is amino-sugar metabolism; N-acetylneuraminate degradation; D-fructose 6-phosphate from N-acetylneuraminate: step 5/5. Functionally, catalyzes the reversible isomerization-deamination of glucosamine 6-phosphate (GlcN6P) to form fructose 6-phosphate (Fru6P) and ammonium ion. The sequence is that of Glucosamine-6-phosphate deaminase from Staphylococcus epidermidis (strain ATCC 35984 / DSM 28319 / BCRC 17069 / CCUG 31568 / BM 3577 / RP62A).